A 199-amino-acid chain; its full sequence is Pyrrolidone-carboxylate peptidase (199 aa).

Catalysis depends on residues Glu80, Cys142, and His166.

It belongs to the peptidase C15 family. Homotetramer.

It is found in the cytoplasm. It catalyses the reaction Release of an N-terminal pyroglutamyl group from a polypeptide, the second amino acid generally not being Pro.. Removes 5-oxoproline from various penultimate amino acid residues except L-proline. In Oceanobacillus iheyensis (strain DSM 14371 / CIP 107618 / JCM 11309 / KCTC 3954 / HTE831), this protein is Pyrrolidone-carboxylate peptidase.